The primary structure comprises 71 residues: SRY-related protein LG27 (71 aa).

The segment at residues 1–68 (VKRPMNAFMV…KHMADYPNYK (68 aa)) is a DNA-binding region (HMG box).

It is found in the nucleus. The protein is SRY-related protein LG27 of Eublepharis macularius (Leopard gecko).